The following is a 253-amino-acid chain: Indole-3-glycerol phosphate synthase (253 aa).

The protein belongs to the TrpC family.

The enzyme catalyses 1-(2-carboxyphenylamino)-1-deoxy-D-ribulose 5-phosphate + H(+) = (1S,2R)-1-C-(indol-3-yl)glycerol 3-phosphate + CO2 + H2O. Its pathway is amino-acid biosynthesis; L-tryptophan biosynthesis; L-tryptophan from chorismate: step 4/5. This is Indole-3-glycerol phosphate synthase from Exiguobacterium sp. (strain ATCC BAA-1283 / AT1b).